The primary structure comprises 508 residues: NAD(P)H-quinone oxidoreductase subunit 2 B, chloroplastic (508 aa).

Helical transmembrane passes span 24 to 44, 59 to 79, 99 to 119, 124 to 144, 149 to 169, 184 to 204, 227 to 247, 295 to 315, 323 to 343, 354 to 374, 395 to 415, 418 to 438, and 482 to 502; these read LLLF…GLIL, WLYF…LFRW, IFQF…VEYI, MAIT…MFLC, FITI…LSGY, LLMG…LYGL, PGIS…LSPA, WHLL…LIAI, MLAY…IVGD, YMLF…LFGL, ALSL…AGFF, LYLF…IGLL, and MIVC…IIAI.

This sequence belongs to the complex I subunit 2 family. As to quaternary structure, NDH is composed of at least 16 different subunits, 5 of which are encoded in the nucleus.

It localises to the plastid. The protein localises to the chloroplast thylakoid membrane. It catalyses the reaction a plastoquinone + NADH + (n+1) H(+)(in) = a plastoquinol + NAD(+) + n H(+)(out). The enzyme catalyses a plastoquinone + NADPH + (n+1) H(+)(in) = a plastoquinol + NADP(+) + n H(+)(out). In terms of biological role, NDH shuttles electrons from NAD(P)H:plastoquinone, via FMN and iron-sulfur (Fe-S) centers, to quinones in the photosynthetic chain and possibly in a chloroplast respiratory chain. The immediate electron acceptor for the enzyme in this species is believed to be plastoquinone. Couples the redox reaction to proton translocation, and thus conserves the redox energy in a proton gradient. The sequence is that of NAD(P)H-quinone oxidoreductase subunit 2 B, chloroplastic from Ipomoea purpurea (Common morning glory).